A 123-amino-acid chain; its full sequence is Small ribosomal subunit protein uS12 (123 aa).

Aspartate 89 carries the post-translational modification 3-methylthioaspartic acid.

Belongs to the universal ribosomal protein uS12 family. Part of the 30S ribosomal subunit. Contacts proteins S8 and S17. May interact with IF1 in the 30S initiation complex.

With S4 and S5 plays an important role in translational accuracy. Functionally, interacts with and stabilizes bases of the 16S rRNA that are involved in tRNA selection in the A site and with the mRNA backbone. Located at the interface of the 30S and 50S subunits, it traverses the body of the 30S subunit contacting proteins on the other side and probably holding the rRNA structure together. The combined cluster of proteins S8, S12 and S17 appears to hold together the shoulder and platform of the 30S subunit. This is Small ribosomal subunit protein uS12 from Prochlorococcus marinus (strain MIT 9211).